Reading from the N-terminus, the 49-residue chain is MLRKAGLACTVCGSRNYTLNLSSVAKEKRVEVKKFCRTCGKHTLHKETR.

It belongs to the bacterial ribosomal protein bL33 family.

This Lactococcus lactis subsp. cremoris (strain MG1363) protein is Large ribosomal subunit protein bL33C.